The primary structure comprises 469 residues: A-type ATP synthase subunit B 3 (469 aa).

Belongs to the ATPase alpha/beta chains family. Has multiple subunits with at least A(3), B(3), C, D, E, F, H, I and proteolipid K(x).

It localises to the cell membrane. In terms of biological role, component of the A-type ATP synthase that produces ATP from ADP in the presence of a proton gradient across the membrane. The B chain is a regulatory subunit. This Methanospirillum hungatei JF-1 (strain ATCC 27890 / DSM 864 / NBRC 100397 / JF-1) protein is A-type ATP synthase subunit B 3.